We begin with the raw amino-acid sequence, 392 residues long: MRSLATFMSLLTICWGLHEDRLTLANNRFAISLLHNLPTSTETNIFFSPYSISVALGMAFAGARGETREDLFQGFGYPRSDIDDDAVLEAYASHTRRLKSLRSNSTLDAAIGAAIHERISLLSSFEDVLNNSFGADILKVDFINGGQAAVDVINGWVHRKTRGKINLLFGGPLETIIRLVLLNAIYFKGTWDTVFDQRLTTKKPFMNACSTPTEVDTMRGEVYVRHKSFPLLGVDIAEIPYRGMDYSMTILLPTRIDGAEVLKRNITEHLLQDLVKQLVEQQVTVYLPKFKLETEYLLKDHLKKLGINRIFGSGADFSGITHGANLAVSDVVHKTVLEVHEAGTEAAGATGVIIVAESLVESVEFRVDHPFIFFIRNTQTKDILFVGQVNHL.

An N-terminal signal peptide occupies residues 1–16 (MRSLATFMSLLTICWG). N-linked (GlcNAc...) asparagine glycans are attached at residues Asn-104, Asn-130, and Asn-265.

This sequence belongs to the serpin family. Female salivary gland.

Its subcellular location is the secreted. In terms of biological role, serpin with unknown function. Weakly inhibits human granzyme B (GZMB). Acts as a substrate for porcine elastase. This Ixodes ricinus (Common tick) protein is Iripin-4.